A 318-amino-acid chain; its full sequence is NADH-ubiquinone oxidoreductase chain 1 (318 aa).

A run of 8 helical transmembrane segments spans residues 2-22 (PMTN…FLML), 68-88 (ITLY…LWTP), 100-120 (LGLL…LWSG), 146-166 (LAII…STLV), 171-191 (HLWL…STLA), 213-233 (IEYA…NIIM), 253-273 (ELYT…FLWI), and 285-305 (LMHL…MWYI).

Belongs to the complex I subunit 1 family. In terms of assembly, core subunit of respiratory chain NADH dehydrogenase (Complex I) which is composed of 45 different subunits.

It is found in the mitochondrion inner membrane. The catalysed reaction is a ubiquinone + NADH + 5 H(+)(in) = a ubiquinol + NAD(+) + 4 H(+)(out). Core subunit of the mitochondrial membrane respiratory chain NADH dehydrogenase (Complex I) which catalyzes electron transfer from NADH through the respiratory chain, using ubiquinone as an electron acceptor. Essential for the catalytic activity and assembly of complex I. The polypeptide is NADH-ubiquinone oxidoreductase chain 1 (MT-ND1) (Pan troglodytes (Chimpanzee)).